The sequence spans 348 residues: NADH-quinone oxidoreductase subunit H (348 aa).

A run of 8 helical transmembrane segments spans residues 21–41 (IIGILVIALPLMLAVAMIIYA), 87–107 (GLFLLAPIITFTVALIVWAVI), 120–140 (IGLLYVLAASSIGVYGVIIAG), 166–186 (IGFVLISVVLWTGSFNMSAIV), 193–213 (IFGFINGYGFNPLLFPMAVVF), 258–278 (NVILMCGLNAILFWGGWLPPV), 283–303 (LYMVPGIIWFFAKLLFFFFVF), and 323–343 (WKVFLPLSLFWVFLVSGWLML).

Belongs to the complex I subunit 1 family. In terms of assembly, NDH-1 is composed of 14 different subunits. Subunits NuoA, H, J, K, L, M, N constitute the membrane sector of the complex.

It localises to the cell inner membrane. The catalysed reaction is a quinone + NADH + 5 H(+)(in) = a quinol + NAD(+) + 4 H(+)(out). In terms of biological role, NDH-1 shuttles electrons from NADH, via FMN and iron-sulfur (Fe-S) centers, to quinones in the respiratory chain. The immediate electron acceptor for the enzyme in this species is believed to be ubiquinone. Couples the redox reaction to proton translocation (for every two electrons transferred, four hydrogen ions are translocated across the cytoplasmic membrane), and thus conserves the redox energy in a proton gradient. This subunit may bind ubiquinone. This is NADH-quinone oxidoreductase subunit H from Rhizorhabdus wittichii (strain DSM 6014 / CCUG 31198 / JCM 15750 / NBRC 105917 / EY 4224 / RW1) (Sphingomonas wittichii).